Reading from the N-terminus, the 217-residue chain is MKFFVDTAEIDAIAELNDLGMVDGVTTNPSLIKKSGRDIIEVTKEICDLVDGPVSAEVTATDAETMIAEGRKLLEIADNITVKVPLTWDGLKACKTLTDDGHKVNVTLCFSANQALLAAKAGATFISPFIGRLDDVNLDGMDLIEDIRTVYDNYGFETEILAASIRTVNHILDSARIGADVITAPPAVIKSMVNHPLTDKGLDAFLADIKAAGIKIL.

Lys83 acts as the Schiff-base intermediate with substrate in catalysis.

This sequence belongs to the transaldolase family. Type 3B subfamily.

It localises to the cytoplasm. The enzyme catalyses D-sedoheptulose 7-phosphate + D-glyceraldehyde 3-phosphate = D-erythrose 4-phosphate + beta-D-fructose 6-phosphate. It functions in the pathway carbohydrate degradation; pentose phosphate pathway; D-glyceraldehyde 3-phosphate and beta-D-fructose 6-phosphate from D-ribose 5-phosphate and D-xylulose 5-phosphate (non-oxidative stage): step 2/3. Functionally, transaldolase is important for the balance of metabolites in the pentose-phosphate pathway. The polypeptide is Probable transaldolase (Ruegeria sp. (strain TM1040) (Silicibacter sp.)).